A 264-amino-acid polypeptide reads, in one-letter code: MKIEAVIFDWAGTTVDYGCFAPLEVFMKIFHKRGVEITAEEARKPMGLLKIDHVRALTEMPRIADEWKRVFGQLPTEADIHEMYEEFAEILFSILPSYATPIDGVKEVIASLRERGIKIGSTTGYTREMMEIVVKEAVLQGYKPDFLVTPDDVPAGRPYPWMCYKNAMELGVYPMNHMIKVGDTVSDMKEGRNAGMWTVGVILGSSELGLTEEEVESMDSVELREKIEIVRNRFVENGAHFTIETMQELENVMEHIEKQELIIS.

Catalysis depends on D9, which acts as the Nucleophile. Positions 9 and 11 each coordinate Mg(2+). Catalysis depends on K50, which acts as the Schiff-base intermediate with substrate. D183 contributes to the Mg(2+) binding site.

The protein belongs to the HAD-like hydrolase superfamily. PhnX family. As to quaternary structure, homodimer. It depends on Mg(2+) as a cofactor.

It carries out the reaction phosphonoacetaldehyde + H2O = acetaldehyde + phosphate + H(+). Its function is as follows. Involved in phosphonate degradation. The chain is Phosphonoacetaldehyde hydrolase from Bacillus cereus (strain B4264).